Reading from the N-terminus, the 545-residue chain is ATP synthase subunit alpha (545 aa).

ATP is bound at residue 173 to 180 (GDRQTGKT).

It belongs to the ATPase alpha/beta chains family. As to quaternary structure, F-type ATPases have 2 components, CF(1) - the catalytic core - and CF(0) - the membrane proton channel. CF(1) has five subunits: alpha(3), beta(3), gamma(1), delta(1), epsilon(1). CF(0) has three main subunits: a(1), b(2) and c(9-12). The alpha and beta chains form an alternating ring which encloses part of the gamma chain. CF(1) is attached to CF(0) by a central stalk formed by the gamma and epsilon chains, while a peripheral stalk is formed by the delta and b chains.

It is found in the cell membrane. It carries out the reaction ATP + H2O + 4 H(+)(in) = ADP + phosphate + 5 H(+)(out). Its function is as follows. Produces ATP from ADP in the presence of a proton gradient across the membrane. The alpha chain is a regulatory subunit. In Clavibacter michiganensis subsp. michiganensis (strain NCPPB 382), this protein is ATP synthase subunit alpha.